A 185-amino-acid chain; its full sequence is ATP-dependent protease subunit HslV (185 aa).

Threonine 12 is a catalytic residue. Residues alanine 168, cysteine 171, and threonine 174 each contribute to the Na(+) site.

This sequence belongs to the peptidase T1B family. HslV subfamily. A double ring-shaped homohexamer of HslV is capped on each side by a ring-shaped HslU homohexamer. The assembly of the HslU/HslV complex is dependent on binding of ATP.

It is found in the cytoplasm. The catalysed reaction is ATP-dependent cleavage of peptide bonds with broad specificity.. With respect to regulation, allosterically activated by HslU binding. Functionally, protease subunit of a proteasome-like degradation complex believed to be a general protein degrading machinery. The protein is ATP-dependent protease subunit HslV of Cereibacter sphaeroides (strain KD131 / KCTC 12085) (Rhodobacter sphaeroides).